A 605-amino-acid polypeptide reads, in one-letter code: Glucose oxidase (605 aa).

Positions 1 to 16 are cleaved as a signal peptide; it reads MKTILSSSLVVSMAAA. Leu-51 and Thr-52 together coordinate FAD. N-linked (GlcNAc...) asparagine glycosylation occurs at Asn-65. Position 72 (Glu-72) interacts with FAD. Asn-111 is a glycosylation site (N-linked (GlcNAc...) asparagine). Residues Ser-125, Asn-129, Gly-130, and Thr-132 each contribute to the FAD site. Cysteines 186 and 228 form a disulfide. Residue Asn-190 is glycosylated (N-linked (GlcNAc...) asparagine). Val-272 is an FAD binding site. N-linked (GlcNAc...) asparagine glycosylation is found at Asn-280, Asn-377, Asn-410, and Asn-495. Catalysis depends on His-538, which acts as the Proton acceptor. Arg-559 and Val-560 together coordinate O2. The FAD site is built by Gly-571 and Met-583.

The protein belongs to the GMC oxidoreductase family. In terms of assembly, homodimer. FAD serves as cofactor.

The protein resides in the secreted. It is found in the cell wall. The protein localises to the cytoplasm. Its subcellular location is the extracellular space. It localises to the extracellular matrix. The enzyme catalyses beta-D-glucose + O2 = D-glucono-1,5-lactone + H2O2. Functionally, glucose oxidase catalyzes the oxidation of beta-D-glucose to D-glucono-delta-lactone and hydrogen peroxide in the presence of molecular oxygen. Acts as a critical factor modulating pathogenicity by controlling transcription of genes important for fungal secondary metabolism and infection such as those coding for enzymes involved in degradation of the host cell wall. This chain is Glucose oxidase, found in Aspergillus carbonarius (strain ITEM 5010).